A 256-amino-acid chain; its full sequence is Thiazole synthase (256 aa).

Lys-98 functions as the Schiff-base intermediate with DXP in the catalytic mechanism. Residues Gly-159, 185–186 (AG), and 207–208 (NT) each bind 1-deoxy-D-xylulose 5-phosphate.

The protein belongs to the ThiG family. In terms of assembly, homotetramer. Forms heterodimers with either ThiH or ThiS.

Its subcellular location is the cytoplasm. The catalysed reaction is [ThiS sulfur-carrier protein]-C-terminal-Gly-aminoethanethioate + 2-iminoacetate + 1-deoxy-D-xylulose 5-phosphate = [ThiS sulfur-carrier protein]-C-terminal Gly-Gly + 2-[(2R,5Z)-2-carboxy-4-methylthiazol-5(2H)-ylidene]ethyl phosphate + 2 H2O + H(+). It functions in the pathway cofactor biosynthesis; thiamine diphosphate biosynthesis. Its function is as follows. Catalyzes the rearrangement of 1-deoxy-D-xylulose 5-phosphate (DXP) to produce the thiazole phosphate moiety of thiamine. Sulfur is provided by the thiocarboxylate moiety of the carrier protein ThiS. In vitro, sulfur can be provided by H(2)S. The polypeptide is Thiazole synthase (Syntrophobacter fumaroxidans (strain DSM 10017 / MPOB)).